The primary structure comprises 230 residues: Flagellar L-ring protein (230 aa).

An N-terminal signal peptide occupies residues 1–15 (MSRLPSLSSLCLAIA). A lipid anchor (N-palmitoyl cysteine) is attached at Cys16. The S-diacylglycerol cysteine moiety is linked to residue Cys16.

Belongs to the FlgH family. The basal body constitutes a major portion of the flagellar organelle and consists of four rings (L,P,S, and M) mounted on a central rod.

It is found in the cell outer membrane. Its subcellular location is the bacterial flagellum basal body. Assembles around the rod to form the L-ring and probably protects the motor/basal body from shearing forces during rotation. The chain is Flagellar L-ring protein from Xanthomonas campestris pv. campestris (strain 8004).